Here is a 618-residue protein sequence, read N- to C-terminus: 1-deoxy-D-xylulose-5-phosphate synthase (618 aa).

Thiamine diphosphate is bound by residues histidine 70 and 111-113; that span reads GHS. Aspartate 142 is a binding site for Mg(2+). Thiamine diphosphate-binding positions include 143–144, asparagine 171, tyrosine 278, and glutamate 360; that span reads GS. Asparagine 171 is a Mg(2+) binding site.

It belongs to the transketolase family. DXPS subfamily. Homodimer. The cofactor is Mg(2+). Thiamine diphosphate is required as a cofactor.

The catalysed reaction is D-glyceraldehyde 3-phosphate + pyruvate + H(+) = 1-deoxy-D-xylulose 5-phosphate + CO2. It participates in metabolic intermediate biosynthesis; 1-deoxy-D-xylulose 5-phosphate biosynthesis; 1-deoxy-D-xylulose 5-phosphate from D-glyceraldehyde 3-phosphate and pyruvate: step 1/1. Its function is as follows. Catalyzes the acyloin condensation reaction between C atoms 2 and 3 of pyruvate and glyceraldehyde 3-phosphate to yield 1-deoxy-D-xylulose-5-phosphate (DXP). In Helicobacter pylori (strain ATCC 700392 / 26695) (Campylobacter pylori), this protein is 1-deoxy-D-xylulose-5-phosphate synthase.